The chain runs to 238 residues: Pyridoxine 5'-phosphate synthase (238 aa).

A 3-amino-2-oxopropyl phosphate-binding site is contributed by Asn-7. 9–10 lines the 1-deoxy-D-xylulose 5-phosphate pocket; it reads DH. Residue Arg-18 coordinates 3-amino-2-oxopropyl phosphate. The active-site Proton acceptor is His-43. Positions 45 and 50 each coordinate 1-deoxy-D-xylulose 5-phosphate. Glu-70 (proton acceptor) is an active-site residue. Thr-100 is a binding site for 1-deoxy-D-xylulose 5-phosphate. The Proton donor role is filled by His-190. Residues Gly-191 and 212–213 each bind 3-amino-2-oxopropyl phosphate; that span reads GH.

Belongs to the PNP synthase family. As to quaternary structure, homooctamer; tetramer of dimers.

It is found in the cytoplasm. It carries out the reaction 3-amino-2-oxopropyl phosphate + 1-deoxy-D-xylulose 5-phosphate = pyridoxine 5'-phosphate + phosphate + 2 H2O + H(+). Its pathway is cofactor biosynthesis; pyridoxine 5'-phosphate biosynthesis; pyridoxine 5'-phosphate from D-erythrose 4-phosphate: step 5/5. Catalyzes the complicated ring closure reaction between the two acyclic compounds 1-deoxy-D-xylulose-5-phosphate (DXP) and 3-amino-2-oxopropyl phosphate (1-amino-acetone-3-phosphate or AAP) to form pyridoxine 5'-phosphate (PNP) and inorganic phosphate. The sequence is that of Pyridoxine 5'-phosphate synthase from Prochlorococcus marinus (strain MIT 9215).